The following is a 503-amino-acid chain: Phenylalanine--tRNA ligase alpha subunit (503 aa).

Ser-2 is subject to N-acetylserine. Residues 2–173 (SDFQLEILKK…KRKLIAQGKI (172 aa)) form a contains the major tRNA-Phe binding sites region. L-phenylalanine-binding positions include Thr-333, 374-376 (QVE), and Tyr-414. Glu-416 serves as a coordination point for Mg(2+). L-phenylalanine is bound at residue Phe-440.

The protein belongs to the class-II aminoacyl-tRNA synthetase family. Phe-tRNA synthetase alpha subunit type 2 subfamily. In terms of assembly, tetramer of two alpha and two beta subunits. Mg(2+) serves as cofactor.

Its subcellular location is the cytoplasm. The catalysed reaction is tRNA(Phe) + L-phenylalanine + ATP = L-phenylalanyl-tRNA(Phe) + AMP + diphosphate + H(+). In Saccharomyces cerevisiae (strain ATCC 204508 / S288c) (Baker's yeast), this protein is Phenylalanine--tRNA ligase alpha subunit (FRS2).